The chain runs to 262 residues: Methionine-rich nacre protein (262 aa).

A signal peptide spans Met-1–Ser-22. Residues Gly-26–Gly-35 show a composition bias toward low complexity. A disordered region spans residues Gly-26 to Asn-84. Over residues Met-36–Asn-84 the composition is skewed to polar residues.

In terms of tissue distribution, expressed in mantle and, after secretion, incorporated into acid-insoluble nacre matrix of the shell (at protein level). Expressed primarily in the mantle with highest level in the mantle pallium and lower level in the mantle edge.

The protein resides in the secreted. This is Methionine-rich nacre protein from Pinctada maxima (Silver-lipped pearl oyster).